A 250-amino-acid polypeptide reads, in one-letter code: Electron transport regulator A (250 aa).

In terms of domain architecture, HTH crp-type spans 164–237; that stretch reads KNAEERLAAF…GKYIIIVDHH (74 aa). Positions 197 to 216 form a DNA-binding region, H-T-H motif; that stretch reads RGDIGNYLGLTVETISRLLG.

As to quaternary structure, monomer.

Regulates anaerobic growth on fumarate, nitrite, Fe(3+), TMAO, DMSO, thiosulfate and sulfite, but not on nitrate nor Mn(4+). The protein is Electron transport regulator A (etrA) of Shewanella oneidensis (strain ATCC 700550 / JCM 31522 / CIP 106686 / LMG 19005 / NCIMB 14063 / MR-1).